Here is a 154-residue protein sequence, read N- to C-terminus: Probable biofilm-surface layer protein B (154 aa).

The N-terminal stretch at 1–30 is a signal peptide; it reads MLKRTSFVSSLFISSAVLLSILLPSGQAHA.

The protein belongs to the BslA/BslB family. As to quaternary structure, monomer in vitro.

It is found in the secreted. In terms of biological role, has a minor role in biofilm architecture. May contribute to the surface hydrophobicity. In Bacillus subtilis (strain 168), this protein is Probable biofilm-surface layer protein B.